A 3083-amino-acid chain; its full sequence is Genome polyprotein (3083 aa).

One can recognise a Peptidase S30 domain in the interval 173–313; that stretch reads VVRSASVNNL…VFFYDDVDHY (141 aa). Residues histidine 226, glutamate 235, and serine 267 each act as for P1 proteinase activity in the active site. An Involved in interaction with stylet and aphid transmission motif is present at residues 365-368; that stretch reads KLSC. The Involved in virions binding and aphid transmission signature appears at 621–623; that stretch reads PTK. Residues 647-769 enclose the Peptidase C6 domain; that stretch reads MYIAKEGYCY…QSEMKHYRVG (123 aa). Active-site for helper component proteinase activity residues include cysteine 655 and histidine 728. The Helicase ATP-binding domain occupies 1239 to 1391; the sequence is EIASSNEGEF…TQFAVKVKTE (153 aa). Residue 1252–1259 coordinates ATP; the sequence is GAVGSGKS. The DECH box signature appears at 1341–1344; sequence DECH. The 160-residue stretch at 1410–1569 folds into the Helicase C-terminal domain; the sequence is DMIQHGNNIL…GLSVTTHGVS (160 aa). A Nuclear localization signal motif is present at residues 1894–1903; the sequence is KRGKVKGNNS. Tyrosine 1918 is subject to O-(5'-phospho-RNA)-tyrosine. Positions 2045-2263 constitute a Peptidase C4 domain; sequence SKSIYKGVRD…IAWGLLNLVD (219 aa). Residues histidine 2090, aspartate 2125, and cysteine 2195 each act as for nuclear inclusion protein A activity in the active site. Residues 2529 to 2653 enclose the RdRp catalytic domain; the sequence is WLYCHADGSQ…AVKDEDSGLL (125 aa). The segment at 2805–2854 is disordered; that stretch reads SDTQTKEADAGAAKRDKDEEKEKKKDVASSSANEKTMTATAKDKDVNAGS. Over residues 2808-2831 the composition is skewed to basic and acidic residues; the sequence is QTKEADAGAAKRDKDEEKEKKKDV. Residues 2832 to 2843 show a composition bias toward polar residues; the sequence is ASSSANEKTMTA.

It belongs to the potyviridae genome polyprotein family. Interacts with host eIF4E protein (via cap-binding region); this interaction mediates the translation of the VPg-viral RNA conjugates. Part of a complex that comprises VPg, RNA, host EIF4E and EIF4G; this interaction mediates the translation of the VPg-viral RNA conjugates. Post-translationally, VPg is uridylylated by the polymerase and is covalently attached to the 5'-end of the genomic RNA. This uridylylated form acts as a nucleotide-peptide primer for the polymerase. In terms of processing, potyviral RNA is expressed as two polyproteins which undergo post-translational proteolytic processing. Genome polyprotein is processed by NIa-pro, P1 and HC-pro proteinases resulting in the production of at least ten individual proteins. P3N-PIPO polyprotein is cleaved by P1 and HC-pro proteinases resulting in the production of three individual proteins. The P1 proteinase and the HC-pro cleave only their respective C-termini autocatalytically. 6K1 is essential for proper proteolytic separation of P3 from CI.

It is found in the host cytoplasmic vesicle. It localises to the host nucleus. The protein resides in the virion. It carries out the reaction RNA(n) + a ribonucleoside 5'-triphosphate = RNA(n+1) + diphosphate. It catalyses the reaction Hydrolyzes glutaminyl bonds, and activity is further restricted by preferences for the amino acids in P6 - P1' that vary with the species of potyvirus, e.g. Glu-Xaa-Xaa-Tyr-Xaa-Gln-|-(Ser or Gly) for the enzyme from tobacco etch virus. The natural substrate is the viral polyprotein, but other proteins and oligopeptides containing the appropriate consensus sequence are also cleaved.. The catalysed reaction is Hydrolyzes a Gly-|-Gly bond at its own C-terminus, commonly in the sequence -Tyr-Xaa-Val-Gly-|-Gly, in the processing of the potyviral polyprotein.. Its function is as follows. Required for aphid transmission and also has proteolytic activity. Only cleaves a Gly-Gly dipeptide at its own C-terminus. Interacts with virions and aphid stylets. Acts as a suppressor of RNA-mediated gene silencing, also known as post-transcriptional gene silencing (PTGS), a mechanism of plant viral defense that limits the accumulation of viral RNAs. May have RNA-binding activity. Has helicase activity. It may be involved in replication. Functionally, indispensable for virus replication. In terms of biological role, mediates the cap-independent, EIF4E-dependent translation of viral genomic RNAs. Binds to the cap-binding site of host EIF4E and thus interferes with the host EIF4E-dependent mRNA export and translation. VPg-RNA directly binds EIF4E and is a template for transcription. Also forms trimeric complexes with EIF4E-EIF4G, which are templates for translation. Its function is as follows. Has RNA-binding and proteolytic activities. An RNA-dependent RNA polymerase that plays an essential role in the virus replication. Functionally, involved in aphid transmission, cell-to-cell and systemis movement, encapsidation of the viral RNA and in the regulation of viral RNA amplification. This Zucchini yellow mosaic virus (strain Reunion Island) (ZYMV) protein is Genome polyprotein.